A 393-amino-acid polypeptide reads, in one-letter code: Lipid-A-disaccharide synthase (393 aa).

Belongs to the LpxB family.

The catalysed reaction is a lipid X + a UDP-2-N,3-O-bis[(3R)-3-hydroxyacyl]-alpha-D-glucosamine = a lipid A disaccharide + UDP + H(+). It participates in bacterial outer membrane biogenesis; LPS lipid A biosynthesis. Condensation of UDP-2,3-diacylglucosamine and 2,3-diacylglucosamine-1-phosphate to form lipid A disaccharide, a precursor of lipid A, a phosphorylated glycolipid that anchors the lipopolysaccharide to the outer membrane of the cell. The protein is Lipid-A-disaccharide synthase of Actinobacillus pleuropneumoniae serotype 5b (strain L20).